The chain runs to 309 residues: Glutaminase (309 aa).

Substrate-binding residues include Ser-64, Asn-114, Glu-160, Asn-167, Tyr-191, Tyr-243, and Val-261.

It belongs to the glutaminase family. As to quaternary structure, homotetramer.

The catalysed reaction is L-glutamine + H2O = L-glutamate + NH4(+). In Methylorubrum extorquens (strain CM4 / NCIMB 13688) (Methylobacterium extorquens), this protein is Glutaminase.